Here is a 4599-residue protein sequence, read N- to C-terminus: Low-density lipoprotein receptor-related protein 1B (4599 aa).

The signal sequence occupies residues 1 to 20 (MSEFLLALLTLSGLLPIARV). Over 25 to 4444 (ADRDQQLCDP…KSDHISTRSI (4420 aa)) the chain is Extracellular. 2 LDL-receptor class A domains span residues 31–70 (LCDP…DTCP) and 76–114 (KCPL…VHCQ). Cystine bridges form between Cys-32–Cys-45, Cys-39–Cys-58, Cys-52–Cys-69, Cys-77–Cys-90, Cys-84–Cys-103, Cys-97–Cys-113, Cys-120–Cys-129, Cys-125–Cys-138, Cys-140–Cys-153, Cys-159–Cys-169, Cys-165–Cys-178, and Cys-180–Cys-193. Residues 116-154 (LLSNCQQLNCQYKCTMVRNSTRCYCEDGFEITEDGRSCK) form the EGF-like 1 domain. Asn-134 carries an N-linked (GlcNAc...) asparagine glycan. In terms of domain architecture, EGF-like 2; calcium-binding spans 155–194 (DQDECAVYGTCSQTCRNTHGSYTCSCVEGYLMQPDNRSCK). Asn-190, Asn-220, Asn-313, and Asn-360 each carry an N-linked (GlcNAc...) asparagine glycan. LDL-receptor class B repeat units follow at residues 295–337 (RNLY…DPIA), 338–381 (GKLF…DLVN), and 382–425 (KLVY…FEDY). The N-linked (GlcNAc...) asparagine glycan is linked to Asn-443. Residues 471-517 (RSHACEVDPYGMPGGCSHICLLSSSYKTRTCRCRTGFNLGSDGRSCK) enclose the EGF-like 3 domain. 4 LDL-receptor class B repeats span residues 568–610 (NYIY…DWIG), 611–656 (NNLY…DPVN), 657–706 (GWMY…DFHT), and 707–750 (NTLY…HGNY). Residues Asn-725 and Asn-758 are each glycosylated (N-linked (GlcNAc...) asparagine). Residues 794-834 (GDNMCRVNNGGCSTLCLAIPGGRVCACADNQLLDENGTTCT) form the EGF-like 4 domain. 6 cysteine pairs are disulfide-bonded: Cys-798/Cys-809, Cys-805/Cys-818, Cys-820/Cys-833, Cys-845/Cys-857, Cys-852/Cys-870, and Cys-864/Cys-881. Asn-829 is a glycosylation site (N-linked (GlcNAc...) asparagine). An LDL-receptor class A 3 domain is found at 844 to 882 (ICKAGEFRCKNRHCIQARWKCDGDDDCLDGSDEDSVNCF). Asn-883 carries N-linked (GlcNAc...) asparagine glycosylation. LDL-receptor class A domains follow at residues 885 to 923 (SCPD…QTCT), 926 to 963 (TCQV…ASCE), 966 to 1003 (TCEP…VGCV), 1005 to 1043 (SCFD…INCT), 1052 to 1089 (GCNG…KGCN), 1094 to 1132 (LCDH…DDCD), and 1135 to 1174 (LCGP…YLCD). Intrachain disulfides connect Cys-886–Cys-898, Cys-893–Cys-911, Cys-905–Cys-922, Cys-927–Cys-939, Cys-934–Cys-952, Cys-946–Cys-962, Cys-967–Cys-980, Cys-975–Cys-993, Cys-987–Cys-1002, Cys-1006–Cys-1018, Cys-1013–Cys-1031, Cys-1025–Cys-1042, Cys-1053–Cys-1066, Cys-1060–Cys-1079, and Cys-1073–Cys-1088. Asn-919 carries an N-linked (GlcNAc...) asparagine glycan. A glycan (N-linked (GlcNAc...) asparagine) is linked at Asn-1041. Residue Asn-1089 is glycosylated (N-linked (GlcNAc...) asparagine). 6 cysteine pairs are disulfide-bonded: Cys-1095–Cys-1109, Cys-1103–Cys-1122, Cys-1116–Cys-1131, Cys-1136–Cys-1150, Cys-1143–Cys-1163, and Cys-1157–Cys-1173. The N-linked (GlcNAc...) asparagine glycan is linked to Asn-1145. 2 consecutive EGF-like domains span residues 1174–1213 (DECS…KTCE) and 1214–1253 (IVDY…ESCT). The N-linked (GlcNAc...) asparagine glycan is linked to Asn-1209. Asn-1298 is a glycosylation site (N-linked (GlcNAc...) asparagine). LDL-receptor class B repeat units lie at residues 1300-1346 (SLLY…DWIA), 1347-1389 (GNIY…DPRY), 1390-1436 (GILF…DHFE), 1437-1480 (KRIV…LYGS), and 1481-1522 (EVYW…YHPS). N-linked (GlcNAc...) asparagine glycosylation is found at Asn-1502, Asn-1549, and Asn-1636. The EGF-like 7 domain occupies 1527–1570 (APNPCAANDGKGPCSHMCLINHNRSAACACPHLMKLSSDKKTCY). 4 LDL-receptor class B repeats span residues 1618-1660 (ERLY…DWVS), 1661-1704 (RNLY…HPVR), 1705-1744 (GKLY…DYVE), and 1745-1787 (NKLY…TIMD). Asn-1754 and Asn-1816 each carry an N-linked (GlcNAc...) asparagine glycan. The EGF-like 8 domain maps to 1834-1875 (GSNSCQLNNGGCSQLCLPTSETTRTCMCTVGYYLQKNRMSCQ). 3 disulfide bridges follow: Cys-1838-Cys-1849, Cys-1845-Cys-1859, and Cys-1861-Cys-1874. Asn-1921 is a glycosylation site (N-linked (GlcNAc...) asparagine). LDL-receptor class B repeat units follow at residues 1922–1964 (DTIY…DWIA), 1965–2007 (GNIY…HPEK), 2008–2051 (GLLF…DYEE), and 2052–2095 (NKLY…FGAY). Asn-1983 carries an N-linked (GlcNAc...) asparagine glycan. N-linked (GlcNAc...) asparagine glycosylation occurs at Asn-2105. One can recognise an EGF-like 9 domain in the interval 2143–2183 (GTNVCARDNGGCKQLCLYRGNSRRTCACAHGYLAEDGVTCL). Cystine bridges form between Cys-2147–Cys-2158, Cys-2154–Cys-2168, and Cys-2170–Cys-2182. LDL-receptor class B repeat units follow at residues 2239 to 2280 (NRIF…HRAW), 2281 to 2329 (DTLY…DECQ), 2330 to 2374 (NLMF…DYRA), 2375 to 2416 (EKLY…VYDN), and 2417 to 2459 (YIFW…VAND). Residues Asn-2458, Asn-2488, and Asn-2507 are each glycosylated (N-linked (GlcNAc...) asparagine). An EGF-like 10 domain is found at 2464-2504 (ELSPCALLNGGCHDLCLLTPNGRVNCSCRGDRILLEDNRCV). The 40-residue stretch at 2509 to 2548 (SCNAYSEFECGNGECIDYQLTCDGIPHCKDKSDEKLLYCE) folds into the LDL-receptor class A 11 domain. Cystine bridges form between Cys-2510–Cys-2523, Cys-2518–Cys-2536, and Cys-2530–Cys-2547. Asn-2549 carries N-linked (GlcNAc...) asparagine glycosylation. LDL-receptor class A domains lie at 2551–2587 (SCRR…LDCK), 2590–2626 (TCAT…KNCN), 2629–2675 (DCTH…LKCP), 2681–2717 (KCEE…FHCD), 2719–2757 (SCSW…SICG), and 2760–2800 (TCAA…AGCA). 6 cysteine pairs are disulfide-bonded: Cys-2552–Cys-2564, Cys-2559–Cys-2577, Cys-2571–Cys-2586, Cys-2591–Cys-2603, Cys-2598–Cys-2616, and Cys-2610–Cys-2625. N-linked (GlcNAc...) asparagine glycosylation is found at Asn-2626 and Asn-2647. Intrachain disulfides connect Cys-2630–Cys-2652, Cys-2646–Cys-2665, Cys-2659–Cys-2674, Cys-2682–Cys-2694, Cys-2689–Cys-2707, Cys-2701–Cys-2716, Cys-2720–Cys-2732, Cys-2727–Cys-2745, Cys-2739–Cys-2756, Cys-2761–Cys-2774, Cys-2768–Cys-2787, and Cys-2781–Cys-2799. The N-linked (GlcNAc...) asparagine glycan is linked to Asn-2802. LDL-receptor class A domains follow at residues 2804 to 2841 (TCDE…PQCG), 2844 to 2885 (QCGT…PKCK), and 2890 to 2926 (SCNS…RNCH). 15 disulfides stabilise this stretch: Cys-2805–Cys-2817, Cys-2812–Cys-2830, Cys-2824–Cys-2840, Cys-2845–Cys-2857, Cys-2852–Cys-2871, Cys-2865–Cys-2884, Cys-2891–Cys-2903, Cys-2898–Cys-2916, Cys-2910–Cys-2925, Cys-2930–Cys-2942, Cys-2938–Cys-2951, Cys-2953–Cys-2966, Cys-2972–Cys-2982, Cys-2978–Cys-2991, and Cys-2993–Cys-3007. Asn-2892 carries N-linked (GlcNAc...) asparagine glycosylation. Positions 2927–2967 (INECLSKKVSGCSQDCQDLPVSYKCKCWPGFQLKDDGKTCV) constitute an EGF-like 11 domain. An EGF-like 12; calcium-binding domain is found at 2968–3008 (DIDECSSGFPCSQQCINTYGTYKCLCTDGYEIQPDNPNGCK). 3 N-linked (GlcNAc...) asparagine glycosylation sites follow: Asn-3034, Asn-3066, and Asn-3076. LDL-receptor class B repeat units lie at residues 3055 to 3098 (EFIY…DWIG), 3099 to 3141 (KNLY…DPQA), 3142 to 3185 (GYLY…DYVN), 3186 to 3224 (RRLY…TLFE), and 3225 to 3268 (DYIY…HSYR). The N-linked (GlcNAc...) asparagine glycan is linked to Asn-3164. An EGF-like 13 domain is found at 3273–3314 (SKHLCMINNGGCSHLCLLAPGKTHTCACPTNFYLAADNRTCL). Asn-3310 and Asn-3316 each carry an N-linked (GlcNAc...) asparagine glycan. LDL-receptor class A domains follow at residues 3316–3353 (NCTA…DDCP), 3356–3392 (RCQP…LNCD), 3395–3432 (VCLS…RDCP), 3435–3472 (SCSP…ANCD), 3475–3511 (TCGP…ENCK), 3514–3550 (TCTL…RNCE), 3552–3588 (SCSK…KSCE), 3593–3629 (TCSS…MDCV), 3631–3668 (ECKE…ENCE), 3673–3711 (ICRA…DMCV), 3714–3752 (LCPS…DHCG), and 3761–3797 (PCKK…QGCR). 42 disulfide bridges follow: Cys-3317/Cys-3329, Cys-3324/Cys-3342, Cys-3336/Cys-3352, Cys-3357/Cys-3369, Cys-3364/Cys-3382, Cys-3376/Cys-3391, Cys-3396/Cys-3409, Cys-3403/Cys-3422, Cys-3416/Cys-3431, Cys-3436/Cys-3449, Cys-3443/Cys-3462, Cys-3456/Cys-3471, Cys-3476/Cys-3488, Cys-3483/Cys-3501, Cys-3495/Cys-3510, Cys-3515/Cys-3527, Cys-3522/Cys-3540, Cys-3534/Cys-3549, Cys-3553/Cys-3565, Cys-3560/Cys-3578, Cys-3572/Cys-3587, Cys-3594/Cys-3606, Cys-3601/Cys-3619, Cys-3613/Cys-3628, Cys-3632/Cys-3645, Cys-3639/Cys-3658, Cys-3652/Cys-3667, Cys-3674/Cys-3686, Cys-3681/Cys-3699, Cys-3693/Cys-3710, Cys-3715/Cys-3729, Cys-3723/Cys-3742, Cys-3736/Cys-3751, Cys-3762/Cys-3774, Cys-3769/Cys-3787, Cys-3781/Cys-3796, Cys-3805/Cys-3818, Cys-3812/Cys-3827, Cys-3829/Cys-3842, Cys-3848/Cys-3858, Cys-3854/Cys-3867, and Cys-3869/Cys-3880. Asn-3682 carries N-linked (GlcNAc...) asparagine glycosylation. EGF-like domains are found at residues 3801-3843 (TEYT…RQCE) and 3844-3881 (DLNE…NTCI). Residues Asn-3877, Asn-3894, and Asn-3906 are each glycosylated (N-linked (GlcNAc...) asparagine). LDL-receptor class B repeat units follow at residues 3933-3980 (DMII…DWVA), 3981-4038 (GNIY…NPKR), 4039-4082 (GMMY…DYFS), and 4083-4127 (ERIY…FEDY). N-linked (GlcNAc...) asparagine glycosylation occurs at Asn-4017. EGF-like domains are found at residues 4171–4208 (DLPN…GTCN), 4213–4249 (LDDS…ERCE), 4249–4285 (EVNH…PNCG), 4285–4321 (GKTV…DRCQ), 4321–4357 (QYYV…PKCE), 4357–4392 (EVDK…SSCQ), and 4390–4427 (SCQL…TQCE). An N-linked (GlcNAc...) asparagine glycan is attached at Asn-4204. 11 cysteine pairs are disulfide-bonded: Cys-4217–Cys-4227, Cys-4221–Cys-4237, Cys-4253–Cys-4263, Cys-4257–Cys-4273, Cys-4275–Cys-4284, Cys-4289–Cys-4299, Cys-4293–Cys-4309, Cys-4311–Cys-4320, Cys-4325–Cys-4335, Cys-4329–Cys-4345, and Cys-4347–Cys-4356. An N-linked (GlcNAc...) asparagine glycan is attached at Asn-4381. Cystine bridges form between Cys-4394–Cys-4404, Cys-4398–Cys-4415, and Cys-4417–Cys-4426. The N-linked (GlcNAc...) asparagine glycan is linked to Asn-4420. Residues 4445 to 4467 (AIIVPLVLLVTLITTLVIGLVLC) traverse the membrane as a helical segment. The Cytoplasmic portion of the chain corresponds to 4468–4599 (KRKRRTKTIR…IEIGIRETVA (132 aa)). 2 consecutive short sequence motifs (endocytosis signal) follow at residues 4492–4495 (NPSY) and 4559–4562 (NPVY).

Belongs to the LDLR family. As to quaternary structure, binds LRPAP1, PLAU, PLAT and SERPINE1; binding is followed by internalization and degradation of the ligands. In terms of tissue distribution, expressed in thyroid gland and in salivary gland, as well as in adult and fetal brain.

The protein localises to the membrane. Potential cell surface proteins that bind and internalize ligands in the process of receptor-mediated endocytosis. The polypeptide is Low-density lipoprotein receptor-related protein 1B (LRP1B) (Homo sapiens (Human)).